The sequence spans 129 residues: MPTYNQLVRFGRKSKTRKTKSPALESNPFKSGVCLVVKTVTPKKPNSALRKIATVRLSNKRTVNAYIPGEKHSVKEHDRVLVRGGQVPDLPGVKYHIVLGAYDIAGVKGRKQGRSRYGAPRKQVAVTKK.

Disordered regions lie at residues 1–25 (MPTYNQLVRFGRKSKTRKTKSPALE) and 110–129 (RKQGRSRYGAPRKQVAVTKK). The span at 10-20 (FGRKSKTRKTK) shows a compositional bias: basic residues.

Belongs to the universal ribosomal protein uS12 family. Part of the 30S ribosomal subunit. Contacts proteins S8 and S17. May interact with IF1 in the 30S initiation complex.

Functionally, with S4 and S5 plays an important role in translational accuracy. Interacts with and stabilizes bases of the 16S rRNA that are involved in tRNA selection in the A site and with the mRNA backbone. Located at the interface of the 30S and 50S subunits, it traverses the body of the 30S subunit contacting proteins on the other side and probably holding the rRNA structure together. The combined cluster of proteins S8, S12 and S17 appears to hold together the shoulder and platform of the 30S subunit. This chain is Small ribosomal subunit protein uS12, found in Rickettsia conorii (strain ATCC VR-613 / Malish 7).